A 61-amino-acid chain; its full sequence is Probable tautomerase SMU_1087 (61 aa).

Residue proline 2 is the Proton acceptor; via imino nitrogen of the active site.

It belongs to the 4-oxalocrotonate tautomerase family.

In Streptococcus mutans serotype c (strain ATCC 700610 / UA159), this protein is Probable tautomerase SMU_1087.